A 228-amino-acid polypeptide reads, in one-letter code: Probable GTP-binding protein EngB (228 aa).

The EngB-type G domain occupies 48–222 (YGLEVAFVGY…QFVLNNWFSS (175 aa)). Residues 56 to 63 (GYSNSGKS), 83 to 87 (GRTRL), 101 to 104 (DFPG), 168 to 171 (NKMD), and 201 to 203 (FSS) contribute to the GTP site. Residues serine 63 and threonine 85 each contribute to the Mg(2+) site.

Belongs to the TRAFAC class TrmE-Era-EngA-EngB-Septin-like GTPase superfamily. EngB GTPase family. Mg(2+) serves as cofactor.

In terms of biological role, necessary for normal cell division and for the maintenance of normal septation. The chain is Probable GTP-binding protein EngB from Buchnera aphidicola subsp. Baizongia pistaciae (strain Bp).